The chain runs to 53 residues: Large ribosomal subunit protein eL24 (53 aa).

Zn(2+) contacts are provided by Cys-4, Cys-7, Cys-30, and Cys-34. Residues 4–34 (CSFCNKEIEEGTGKMYVKKDGSIYFFCSSKC) form a C4-type zinc finger.

It belongs to the eukaryotic ribosomal protein eL24 family. As to quaternary structure, part of the 50S ribosomal subunit. Forms a cluster with proteins L3 and L14. It depends on Zn(2+) as a cofactor.

Functionally, binds to the 23S rRNA. The protein is Large ribosomal subunit protein eL24 of Methanobrevibacter smithii (strain ATCC 35061 / DSM 861 / OCM 144 / PS).